Reading from the N-terminus, the 741-residue chain is uncharacterized protein (741 aa).

An N-terminal signal peptide occupies residues 1–22 (MKSVKIIIILALALLIQISHIA).

This is an uncharacterized protein from Archaeoglobus fulgidus (strain ATCC 49558 / DSM 4304 / JCM 9628 / NBRC 100126 / VC-16).